The sequence spans 851 residues: DNA mismatch repair protein MutS (851 aa).

Gly602 to Ser609 contacts ATP.

Belongs to the DNA mismatch repair MutS family.

In terms of biological role, this protein is involved in the repair of mismatches in DNA. It is possible that it carries out the mismatch recognition step. This protein has a weak ATPase activity. This chain is DNA mismatch repair protein MutS, found in Streptococcus pyogenes serotype M18 (strain MGAS8232).